A 445-amino-acid polypeptide reads, in one-letter code: MSRKYFGTDGIRGRVGEFPITPDFVLKLGWAVGMAFRRQGNCRVLIGKDTRSSGYMFESAFEAGLSASGADTLLLGPMPTPGIAYLTRTFHAEAGVVISASHNPHDDNGIKFFSGQGTKLPDDVELMIEELLDAPMTVVESARLGKVSRINDAAGRYIEFCKSSVPTSTDFNGLKVVLDCANGATYKIAPNVFRELGAEVTVLAASPNGLNINDKCGSTHLDGLQAAVIEHHADLGIAFDGDGDRVMMVDHTGAIVDGDELLFLIARDMQESGRLQGGVVGTLMSNLGLELALQDLHIPFVRAKVGDRYVMAELLARNWMLGGENSGHIVCCQNTTTGDAIIAALQVLMALKRRGQTLAEARQGIRKCPQVLINVRFKGESDPLEHPSVKEASARVTEQMGGRGRVLLRKSGTEPLVRVMVEGDEEATVRAHAEQLAKIVSEVCA.

The Phosphoserine intermediate role is filled by S101. 4 residues coordinate Mg(2+): S101, D240, D242, and D244. Residue S101 is modified to Phosphoserine.

The protein belongs to the phosphohexose mutase family. It depends on Mg(2+) as a cofactor. In terms of processing, activated by phosphorylation.

The enzyme catalyses alpha-D-glucosamine 1-phosphate = D-glucosamine 6-phosphate. Its function is as follows. Catalyzes the conversion of glucosamine-6-phosphate to glucosamine-1-phosphate. This is Phosphoglucosamine mutase from Pseudomonas paraeruginosa (strain DSM 24068 / PA7) (Pseudomonas aeruginosa (strain PA7)).